A 1708-amino-acid polypeptide reads, in one-letter code: MAAANAPIAMREALTLTSLGIAPQFVTFTHVTMESEKYICVRETSPQNSVVIVDMAMPAQPLRRPITADSALMNPNTRILALKAQIPGTTQDHLQIFNIEAKTKIKSHQMPEQVVFWKWITPKLLGLVTQTSVYHWSIEGDSEPAKMFDRTANLANNQIINYRCDPSEKWLVLIGIAPGAPERPQLVKGNMQLFSVDQQRSQALEAHAASFASFKVVGNENPSTLICFASKTTNAGQITSKLHVIELGAQPGKPGFSKKQADLFFPPDFQDDFPVAMQISQKYGLIYVITKLGLLFVYDLETAAAVYRNRISPDPIFLTAESSASGGFYAINRRGQVLHATVNDATIVPFVSSQLNNLELAVNLAKRANLPGAENLVVQRFQELFAQTKYKEAAELAAESPQGLLRTPDTVAKFQSVPVQAGQTPPLLQYFGTLLTRGKLNAYESLELSRLVVNQNKKNLLENWLAEDKLECSEELGDLVKTVDNDLALKIYIKARATPKVVAAFAERREFDKILIYSKQVGYTPDYLFLLQTILRTDPQGAVNFALMMSQMEGGCPVDYNTITDLFLQRNMIREATAFLLDVLKPNLPEHAFLQTKVLEINLVTYPNVADAILANGMFSHYDRPRVAQLCEKAGLYLRALQHYTELPDIKRVMVNTHAIEPQALVEFFGTLSREWALECMKDLLLVNLRGNLQIVVQAAKEYSEQLGVDACIKLFEQFKSYEGLYFFLGAYLSSSEDPDIHFKYIEAAARTGQIKEVERVTRESNFYDAEKTKNFLMEAKLPDARPLINVCDRFGFVPDLTHYLYTNNMLRYIEGYVQKVNPGNAPLVVGQLLDDECPEDFIKGLILSVRSLLPVEPLVDECEKRNRLRLLTQFLEHLVSEGSQDVHVHNALGKIIIDSNNNPEHFLTTNPFYDSRVVGKYCEKRDPTLAVVAYRRGQCDDELINVTNKNSLFKLQARYVVERMDGDLWDKVLQPENEYRRQLIDQVVSTALPESKSPEQVSAAVKAFMTADLPHELIELLEKIVLQNSAFSGNFNLQNLLILTAIKADPSRVMDYVNRLDNFDGPAVGEVAVEAQLFEEAFAIFKKFNLNVQAVNVLLDNIRSIERAEEFAFRVEEDAVWSQVAKAQLREGLVSEAIESFIRADDATHFLDVIRAAEEANVYDDLVKYLLMVRQKAREPKVDGELIFAYAKIDRLSDIEEFILMPNVANLQNVGDRLYDEELYEAAKIIYAFISNWAKLAVTLVKLKQFQGAVDAARKANSAKTWKEVCFACVDAEEFRLAQICGLNIIVQVDDLEEVSEYYQNRGCFNELISLMESGLGLERAHMGIFTELGVLYARYRPEKLMEHIKLFSTRLNIPKLIRACDEQQHWKELTYLYIQYDEFDNAATTIMNHSPDAWDHMQFKDVAVKVANVELYYKAVHFYLQEHPDLINDLLNVLALRLDHTRVVDIMRKAGQLHLVKPYMVAVQSNNVSAVNESLNELYVEEEDYERLRESVDMHDNFDQIGLAQKLEKHELLEMRRIAAYIYKKAGRWKQSIALSKKDNMYKDCMETCSQSGDRELSEDLLVYFIEQGKKECFASCLFICYDLIRADVALELAWMNNMVDFAFPYLLQFIREYTSKVDELVKDRIESQNEVRAKEKEEKDLVAQQNMYAQLLPLALPAPPGMGGPPPPMGMPGMPPMGGMGMPPMGPGPMPAYGMPPMGSY.

The interval methionine 1–tyrosine 492 is globular terminal domain. WD40-like repeat stretches follow at residues phenylalanine 25–threonine 67, alanine 68–glutamine 113, valine 114–alanine 155, asparagine 156–glutamate 205, alanine 206–glutamine 270, aspartate 271–aspartate 314, and proline 315–asparagine 343. The binding site for the uncoating ATPase, involved in lattice disassembly stretch occupies residues glutamate 462–aspartate 478. A flexible linker region spans residues isoleucine 493–arginine 536. Residues threonine 537 to proline 648 are distal segment. Positions threonine 537–tyrosine 1708 are heavy chain arm. CHCR repeat units lie at residues glutamine 551–valine 697, alanine 700–phenylalanine 842, isoleucine 847–aspartate 986, leucine 993–alanine 1138, phenylalanine 1142–alanine 1283, leucine 1288–asparagine 1434, and leucine 1437–phenylalanine 1580. The proximal segment stretch occupies residues valine 653–tyrosine 1708. The segment at alanine 1227–lysine 1536 is involved in binding clathrin light chain. The interval serine 1564–tyrosine 1708 is trimerization.

This sequence belongs to the clathrin heavy chain family. In terms of assembly, clathrin triskelions, composed of 3 heavy chains and 3 light chains, are the basic subunits of the clathrin coat.

The protein resides in the cytoplasmic vesicle membrane. It localises to the membrane. It is found in the coated pit. Its function is as follows. Clathrin is the major protein of the polyhedral coat of coated pits and vesicles. This Oryza sativa subsp. japonica (Rice) protein is Clathrin heavy chain 2.